The sequence spans 839 residues: Autophagy-related protein 9A (839 aa).

The tract at residues 1 to 20 (MAQFDTEYQRLEASYSDSPP) is disordered. At Ala2 the chain carries N-acetylalanine. The Cytoplasmic segment spans residues 2–61 (AQFDTEYQRLEASYSDSPPGEEDLLVHVAEGSKSPWHHIENLDLFFSRVYNLHQKNGFTC). Positions 8-11 (YQRL) match the Tyrosine-based sorting signal motif. Residues Ser14, Ser16, and Ser18 each carry the phosphoserine modification. A helical transmembrane segment spans residues 62 to 84 (MLIGEIFELMQFLFVVAFTTFLV). The Lumenal segment spans residues 85 to 128 (SCVDYDILFANKMVNHSLHPTEPVKVTLPDAFLPAQVCSARIQE). N-linked (GlcNAc...) asparagine glycosylation is present at Asn99. The helical transmembrane segment at 129-154 (NGSLITILVIAGVFWIHRLIKFIYNI) threads the bilayer. The Cytoplasmic segment spans residues 155 to 290 (CCYWEIHSFY…ELAQRLSNRI (136 aa)). Residues 291-301 (LWIGIANFLLC) lie within the membrane without spanning it. The Cytoplasmic portion of the chain corresponds to 302-319 (PLILIWQILYAFFSYAEV). Residues 320-328 (LKREPGALG) lie within the membrane without spanning it. Topologically, residues 329 to 371 (ARCWSLYGRCYLRHFNELEHELQSRLNRGYKPASKYMNCFLSP) are cytoplasmic. The chain crosses the membrane as a helical span at residues 372–397 (LLTLLAKNGAFFAGSILAVLIALTIY). The Lumenal segment spans residues 398 to 406 (DEDVLAVEH). A helical transmembrane segment spans residues 407 to 424 (VLTTVTLLGVTVTVCRSF). The Cytoplasmic portion of the chain corresponds to 425-470 (IPDQHMVFCPEQLLRVILAHIHYMPDHWQGNAHRSQTRDEFAQLFQ). The stretch at 471–480 (YKAVFILEEL) is an intramembrane region. At 481 to 483 (LSP) the chain is on the cytoplasmic side. An intramembrane segment occupies 484 to 492 (IVTPLILIF). Residues 493–839 (CLRPRALEII…DELPPQVHKV (347 aa)) lie on the Cytoplasmic side of the membrane. A phosphoserine mark is found at Ser656, Ser735, Ser738, Ser741, and Ser828. Disordered stretches follow at residues 656-686 (SPLQ…SSGS) and 717-839 (HKQQ…VHKV). The segment covering 724 to 736 (EPERHVWHRRESD) has biased composition (basic and acidic residues). Acidic residues-rich tracts occupy residues 737–747 (ESGESAPDEGG) and 823–832 (VPEEGSEDEL).

The protein belongs to the ATG9 family. Homotrimer; forms a homotrimer with a central pore that forms a path between the two membrane leaflets. Interacts (via cytoplasmic its C-terminus) with ATG2A. Interacts with SUPT20H. Interacts (via the tyrosine-based sorting signal motif) with AP4M1; promoting association with the AP-4 complex. Interacts with ARFIP1 and ARFIP2. Interacts with PI4K2A and PI4KB. Interacts with ATG4A; the interaction is direct and promotes ATG9A trafficking. In terms of processing, ufmylated in a DDRGK1 dependent manner.

It localises to the preautophagosomal structure membrane. The protein resides in the cytoplasmic vesicle. It is found in the autophagosome membrane. Its subcellular location is the golgi apparatus. The protein localises to the trans-Golgi network membrane. It localises to the late endosome membrane. The protein resides in the recycling endosome membrane. It is found in the endoplasmic reticulum membrane. Its subcellular location is the mitochondrion membrane. It catalyses the reaction a 1,2-diacyl-sn-glycero-3-phosphocholine(in) = a 1,2-diacyl-sn-glycero-3-phosphocholine(out). The catalysed reaction is a 1,2-diacyl-sn-glycero-3-phospho-L-serine(in) = a 1,2-diacyl-sn-glycero-3-phospho-L-serine(out). It carries out the reaction a 1,2-diacyl-sn-glycero-3-phosphoethanolamine(in) = a 1,2-diacyl-sn-glycero-3-phosphoethanolamine(out). Phospholipid scramblase involved in autophagy by mediating autophagosomal membrane expansion. Cycles between the preautophagosomal structure/phagophore assembly site (PAS) and the cytoplasmic vesicle pool and supplies membrane for the growing autophagosome. Lipid scramblase activity plays a key role in preautophagosomal structure/phagophore assembly by distributing the phospholipids that arrive through ATG2 (ATG2A or ATG2B) from the cytoplasmic to the luminal leaflet of the bilayer, thereby driving autophagosomal membrane expansion. Also required to supply phosphatidylinositol 4-phosphate to the autophagosome initiation site by recruiting the phosphatidylinositol 4-kinase beta (PI4KB) in a process dependent on ARFIP2, but not ARFIP1. In addition to autophagy, also plays a role in necrotic cell death. The chain is Autophagy-related protein 9A from Homo sapiens (Human).